Reading from the N-terminus, the 290-residue chain is ATP phosphoribosyltransferase (290 aa).

Belongs to the ATP phosphoribosyltransferase family. Long subfamily. Mg(2+) is required as a cofactor.

It localises to the cytoplasm. It catalyses the reaction 1-(5-phospho-beta-D-ribosyl)-ATP + diphosphate = 5-phospho-alpha-D-ribose 1-diphosphate + ATP. It functions in the pathway amino-acid biosynthesis; L-histidine biosynthesis; L-histidine from 5-phospho-alpha-D-ribose 1-diphosphate: step 1/9. Feedback inhibited by histidine. Its function is as follows. Catalyzes the condensation of ATP and 5-phosphoribose 1-diphosphate to form N'-(5'-phosphoribosyl)-ATP (PR-ATP). Has a crucial role in the pathway because the rate of histidine biosynthesis seems to be controlled primarily by regulation of HisG enzymatic activity. This is ATP phosphoribosyltransferase (hisG) from Saccharolobus solfataricus (strain ATCC 35092 / DSM 1617 / JCM 11322 / P2) (Sulfolobus solfataricus).